Reading from the N-terminus, the 636-residue chain is Protein meg-1 (636 aa).

3 stretches are compositionally biased toward polar residues: residues 1–13 (MDNR…NGNF), 38–54 (SSGN…NQQQ), and 292–355 (LSMN…QYNH). Disordered regions lie at residues 1 to 54 (MDNR…NQQQ), 289 to 367 (LFNL…APHL), 484 to 504 (SDVA…SMYI), and 521 to 542 (LDSS…KTPS). Position 574 is a phosphoserine; by mbk-2 (Ser-574). Residues 591–636 (MSQSFLHQQDDEAPDCTKNVHSESDLKQAEPQESDKQSDKELPSNE) form a disordered region. Over residues 608–636 (KNVHSESDLKQAEPQESDKQSDKELPSNE) the composition is skewed to basic and acidic residues.

In terms of assembly, interacts with pptr-1, pptr-2 and pgl-1. Post-translationally, phosphorylated by mbk-2, which promotes the disassembly of zygotic P granules in the anterior cytoplasm of pre-gastrulation embryos. Dephosphorylated by a phosphatase complex containing the PP2A regulatory subunit pptr-1, which promotes the assembly and accumulation of zygotic P granules in the posterior cytoplasm of pre-gastrulation embryos. As to expression, not expressed in the adult germline or in any somatic tissues.

The protein localises to the cytoplasmic granule. Its function is as follows. P granule component, which acts redundantly with P granule component meg-2 to promote P granule segregation during embryogenesis, and germ cell proliferation and differentiation in larval stages. In its phosphorylated form, and together with meg-2, promotes the disassembly of zygotic P granules in the anterior cytoplasm of pre-gastrulation embryos. In its dephosphorylated form, and together with meg-2, promotes the assembly and accumulation of zygotic P granules in the posterior cytoplasm of pre-gastrulation embryos. May function with the nanos family members nos-2 and nos-3 to promote germ cell proliferation during larval development. Required for fertility. This Caenorhabditis elegans protein is Protein meg-1.